We begin with the raw amino-acid sequence, 458 residues long: Hepatocyte nuclear factor 3-beta (458 aa).

Residues 14 to 93 (DWSSYYAEPE…AGAMAGMSGS (80 aa)) are transactivation domain 1. Residues 106-113 (LSPSLSPL) carry the Nuclear localization signal motif. T156 bears the Phosphothreonine; by PKB/AKT1 mark. The segment at residues 159–252 (KPPYSYISLI…ENGCYLRRQK (94 aa)) is a DNA-binding region (fork-head). Phosphoserine is present on residues S212 and S283. A disordered region spans residues 286 to 365 (QLGEAAGSAS…PGLPPEAHLK (80 aa)). Polar residues predominate over residues 294–310 (ASETPAGTESPHSSASP). Residue T301 is modified to Phosphothreonine. A phosphoserine mark is found at S303, S306, S307, and S309. Positions 339 to 352 (PGQQQQAAAHLLGP) are enriched in low complexity. Residues 361 to 458 (EAHLKPEHHY…VYSRPIMNSS (98 aa)) are transactivation domain 2. Phosphoserine is present on residues S437 and S458.

As to quaternary structure, binds DNA as a monomer. Binds TLE1. Interacts with FOXA1 and FOXA3. Interacts with PRKDC. Interacts with AKT1. Interacts with TET1; this interaction may recruit TET1 to specific genomic loci to mediate their demethylation. Post-translationally, phosphorylation on Thr-156 abolishes binding to target promoters and subsequent transcription activation upon insulin stimulation. As to expression, liver.

It is found in the nucleus. The protein resides in the cytoplasm. In terms of biological role, transcription factor that is involved in embryonic development, establishment of tissue-specific gene expression and regulation of gene expression in differentiated tissues. Is thought to act as a 'pioneer' factor opening the compacted chromatin for other proteins through interactions with nucleosomal core histones and thereby replacing linker histones at target enhancer and/or promoter sites. Binds DNA with the consensus sequence 5'-[AC]A[AT]T[AG]TT[GT][AG][CT]T[CT]-3'. In embryonic development is required for notochord formation. Involved in the development of multiple endoderm-derived organ systems such as the liver, pancreas and lungs; FOXA1 and FOXA2 seem to have at least in part redundant roles. Originally described as a transcription activator for a number of liver genes such as AFP, albumin, tyrosine aminotransferase, PEPCK, etc. Interacts with the cis-acting regulatory regions of these genes. Involved in glucose homeostasis; regulates the expression of genes important for glucose sensing in pancreatic beta-cells and glucose homeostasis. Involved in regulation of fat metabolism. Acts synergistically with ONECUT1 to activate transcription of female-specific CYP2C12; the function is inhibited by growth hormone-activated STAT5B. Acts synergistically with HNF4A to activate transcription of APOA1. This chain is Hepatocyte nuclear factor 3-beta (Foxa2), found in Rattus norvegicus (Rat).